Reading from the N-terminus, the 217-residue chain is Small ribosomal subunit protein uS3 (217 aa).

Residues 38–106 form the KH type-2 domain; sequence IRKFIQKELA…QVHINIIEIK (69 aa).

It belongs to the universal ribosomal protein uS3 family. As to quaternary structure, part of the 30S ribosomal subunit. Forms a tight complex with proteins S10 and S14.

Binds the lower part of the 30S subunit head. Binds mRNA in the 70S ribosome, positioning it for translation. The chain is Small ribosomal subunit protein uS3 from Streptococcus uberis (strain ATCC BAA-854 / 0140J).